The sequence spans 613 residues: RNA polymerase sigma factor RpoD (613 aa).

The sigma-70 factor domain-1 stretch occupies residues 2–80; sequence EQNPQSQLKL…TADEDAAEAA (79 aa). The segment at 176 to 213 is disordered; the sequence is PTATHVGSELSQEDLDDDEDEDEEDGDDDSADDDNSID. The segment covering 186-212 has biased composition (acidic residues); it reads SQEDLDDDEDEDEEDGDDDSADDDNSI. The sigma-70 factor domain-2 stretch occupies residues 379–449; it reads MVEANLRLVI…TRSIADQART (71 aa). Residues 403–406 carry the Interaction with polymerase core subunit RpoC motif; the sequence is DLIQ. The segment at 458-534 is sigma-70 factor domain-3; that stretch reads ETINKLNRIS…DTTLELPLDS (77 aa). Residues 547–600 are sigma-70 factor domain-4; that stretch reads VLAGLTAREAKVLRMRFGIDMNTDYTLEEVGKQFDVTRERIRQIEAKALRKLRH. Positions 573-592 form a DNA-binding region, H-T-H motif; sequence LEEVGKQFDVTRERIRQIEA. The segment at 584–599 is interaction with anti-sigma factors; it reads RERIRQIEAKALRKLR.

This sequence belongs to the sigma-70 factor family. RpoD/SigA subfamily. Interacts transiently with the RNA polymerase catalytic core formed by RpoA, RpoB, RpoC and RpoZ (2 alpha, 1 beta, 1 beta' and 1 omega subunit) to form the RNA polymerase holoenzyme that can initiate transcription. Identified in a complex containing RpoD, the RNA polymerase subunits RpoA, RpoB and RpoZ, CRP and DNA. Interacts with Rsd; this prevents interaction with the RNA polymerase catalytic core and with promoter DNA, and as a consequence, promotes transcription from promoters that require alternative sigma factors. Interacts with phage T4 AsiA; this interferes with binding to DNA and to the RNA polymerase. In terms of assembly, (Microbial infection) Interacts with Escherichia phage lambda antitermination protein Q.

It is found in the cytoplasm. Functionally, sigma factors are initiation factors that promote the attachment of RNA polymerase to specific initiation sites and are then released. This sigma factor is the primary sigma factor during exponential growth. Preferentially transcribes genes associated with fast growth, such as ribosomal operons, other protein-synthesis related genes, rRNA- and tRNA-encoding genes and prfB. This chain is RNA polymerase sigma factor RpoD, found in Escherichia coli (strain K12).